A 520-amino-acid chain; its full sequence is Transactivator/viroplasmin protein (520 aa).

The disordered stretch occupies residues 486–520; that stretch reads VQDASADSGPKDGPPPTRSIVEKEDVPTTSSKQVD.

The protein belongs to the caulimoviridae viroplasmin family.

The protein localises to the host cytoplasm. In terms of biological role, enhances the ribosomal termination-reinitiation event leading to the translation of major open reading frames on the polycistronic viral RNAs. The chain is Transactivator/viroplasmin protein from Cauliflower mosaic virus (strain NY8153) (CaMV).